The chain runs to 397 residues: Serpin B10 (397 aa).

The Nuclear localization signal motif lies at 74 to 77 (KKRK).

It belongs to the serpin family. Ov-serpin subfamily.

The protein localises to the nucleus. The protein resides in the cytoplasm. Functionally, protease inhibitor that may play a role in the regulation of protease activities during hematopoiesis and apoptosis induced by TNF. May regulate protease activities in the cytoplasm and in the nucleus. This chain is Serpin B10 (SERPINB10), found in Rhinolophus ferrumequinum (Greater horseshoe bat).